The following is a 266-amino-acid chain: ATP synthase subunit a (266 aa).

Transmembrane regions (helical) follow at residues Lys-38–Ala-58, Leu-99–Ile-119, His-126–Ile-146, Gly-162–Val-182, Leu-191–Tyr-211, and Ser-224–Leu-244.

Belongs to the ATPase A chain family. F-type ATPases have 2 components, CF(1) - the catalytic core - and CF(0) - the membrane proton channel. CF(1) has five subunits: alpha(3), beta(3), gamma(1), delta(1), epsilon(1). CF(0) has three main subunits: a(1), b(2) and c(9-12). The alpha and beta chains form an alternating ring which encloses part of the gamma chain. CF(1) is attached to CF(0) by a central stalk formed by the gamma and epsilon chains, while a peripheral stalk is formed by the delta and b chains.

Its subcellular location is the cell membrane. Key component of the proton channel; it plays a direct role in the translocation of protons across the membrane. The chain is ATP synthase subunit a from Pseudarthrobacter chlorophenolicus (strain ATCC 700700 / DSM 12829 / CIP 107037 / JCM 12360 / KCTC 9906 / NCIMB 13794 / A6) (Arthrobacter chlorophenolicus).